The sequence spans 464 residues: Potassium/proton antiporter CemA (464 aa).

The next 5 membrane-spanning stretches (helical) occupy residues 36-56 (FSLSLWGILKYSGIYFCTEIL), 241-261 (ASVSLQYVGFLLFLFPIQIAI), 341-361 (LLLRLATNAISIATLFPLLIF), 389-409 (ILLLTDLCVGFHSPHGWEILV), and 425-445 (TPCFVSTFPVILDTLFKYWIF).

It belongs to the CemA family.

The protein localises to the plastid. The protein resides in the chloroplast inner membrane. The enzyme catalyses K(+)(in) + H(+)(out) = K(+)(out) + H(+)(in). In terms of biological role, contributes to K(+)/H(+) antiport activity by supporting proton efflux to control proton extrusion and homeostasis in chloroplasts in a light-dependent manner to modulate photosynthesis. Prevents excessive induction of non-photochemical quenching (NPQ) under continuous-light conditions. Indirectly promotes efficient inorganic carbon uptake into chloroplasts. The sequence is that of Potassium/proton antiporter CemA from Adiantum capillus-veneris (Maidenhair fern).